A 125-amino-acid polypeptide reads, in one-letter code: S-adenosylmethionine decarboxylase proenzyme (125 aa).

Catalysis depends on Ser-71, which acts as the Schiff-base intermediate with substrate; via pyruvic acid. Ser-71 carries the pyruvic acid (Ser); by autocatalysis modification. The active-site Proton acceptor; for processing activity is His-76. Cys-91 functions as the Proton donor; for catalytic activity in the catalytic mechanism.

It belongs to the prokaryotic AdoMetDC family. Type 1 subfamily. In terms of assembly, heterotetramer of two alpha and two beta chains arranged as a dimer of alpha/beta heterodimers. It depends on pyruvate as a cofactor. Post-translationally, is synthesized initially as an inactive proenzyme. Formation of the active enzyme involves a self-maturation process in which the active site pyruvoyl group is generated from an internal serine residue via an autocatalytic post-translational modification. Two non-identical subunits are generated from the proenzyme in this reaction, and the pyruvate is formed at the N-terminus of the alpha chain, which is derived from the carboxyl end of the proenzyme. The post-translation cleavage follows an unusual pathway, termed non-hydrolytic serinolysis, in which the side chain hydroxyl group of the serine supplies its oxygen atom to form the C-terminus of the beta chain, while the remainder of the serine residue undergoes an oxidative deamination to produce ammonia and the pyruvoyl group blocking the N-terminus of the alpha chain.

The enzyme catalyses S-adenosyl-L-methionine + H(+) = S-adenosyl 3-(methylsulfanyl)propylamine + CO2. Its pathway is amine and polyamine biosynthesis; S-adenosylmethioninamine biosynthesis; S-adenosylmethioninamine from S-adenosyl-L-methionine: step 1/1. Its function is as follows. Catalyzes the decarboxylation of S-adenosylmethionine to S-adenosylmethioninamine (dcAdoMet), the propylamine donor required for the synthesis of the polyamines spermine and spermidine from the diamine putrescine. The protein is S-adenosylmethionine decarboxylase proenzyme of Pyrobaculum aerophilum (strain ATCC 51768 / DSM 7523 / JCM 9630 / CIP 104966 / NBRC 100827 / IM2).